Here is a 208-residue protein sequence, read N- to C-terminus: Uracil phosphoribosyltransferase (208 aa).

Residues arginine 78, arginine 103, and 130–138 each bind 5-phospho-alpha-D-ribose 1-diphosphate; that span reads DPMLATGGS. Uracil contacts are provided by residues isoleucine 193 and 198–200; that span reads GDA. A 5-phospho-alpha-D-ribose 1-diphosphate-binding site is contributed by aspartate 199.

This sequence belongs to the UPRTase family. It depends on Mg(2+) as a cofactor.

It carries out the reaction UMP + diphosphate = 5-phospho-alpha-D-ribose 1-diphosphate + uracil. It functions in the pathway pyrimidine metabolism; UMP biosynthesis via salvage pathway; UMP from uracil: step 1/1. Allosterically activated by GTP. Its function is as follows. Catalyzes the conversion of uracil and 5-phospho-alpha-D-ribose 1-diphosphate (PRPP) to UMP and diphosphate. The sequence is that of Uracil phosphoribosyltransferase from Blochmanniella pennsylvanica (strain BPEN).